A 272-amino-acid polypeptide reads, in one-letter code: 3-methyl-2-oxobutanoate hydroxymethyltransferase (272 aa).

Positions 43 and 82 each coordinate Mg(2+). 3-methyl-2-oxobutanoate contacts are provided by residues 43–44 (DS), Asp82, and Lys112. Mg(2+) is bound at residue Glu114. The active-site Proton acceptor is Glu179.

Belongs to the PanB family. As to quaternary structure, homodecamer; pentamer of dimers. Mg(2+) is required as a cofactor.

The protein localises to the cytoplasm. It carries out the reaction 3-methyl-2-oxobutanoate + (6R)-5,10-methylene-5,6,7,8-tetrahydrofolate + H2O = 2-dehydropantoate + (6S)-5,6,7,8-tetrahydrofolate. It functions in the pathway cofactor biosynthesis; (R)-pantothenate biosynthesis; (R)-pantoate from 3-methyl-2-oxobutanoate: step 1/2. Functionally, catalyzes the reversible reaction in which hydroxymethyl group from 5,10-methylenetetrahydrofolate is transferred onto alpha-ketoisovalerate to form ketopantoate. The protein is 3-methyl-2-oxobutanoate hydroxymethyltransferase of Staphylococcus epidermidis (strain ATCC 35984 / DSM 28319 / BCRC 17069 / CCUG 31568 / BM 3577 / RP62A).